An 891-amino-acid polypeptide reads, in one-letter code: Protein translocase subunit SecA 1 (891 aa).

ATP contacts are provided by residues Gln-85, 103-107 (GEGKT), and Asp-491. Zn(2+) is bound by residues Cys-877, Cys-879, Cys-888, and Cys-889.

The protein belongs to the SecA family. Monomer and homodimer. Part of the essential Sec protein translocation apparatus which comprises SecA, SecYEG and auxiliary proteins SecDF. Other proteins may also be involved. Requires Zn(2+) as cofactor.

It localises to the cell membrane. The protein resides in the cytoplasm. It catalyses the reaction ATP + H2O + cellular proteinSide 1 = ADP + phosphate + cellular proteinSide 2.. Its function is as follows. Part of the Sec protein translocase complex. Interacts with the SecYEG preprotein conducting channel. Has a central role in coupling the hydrolysis of ATP to the transfer of proteins into and across the cell membrane, serving as an ATP-driven molecular motor driving the stepwise translocation of polypeptide chains across the membrane. This chain is Protein translocase subunit SecA 1, found in Clostridioides difficile (strain 630) (Peptoclostridium difficile).